Reading from the N-terminus, the 155-residue chain is Regulatory protein RecX (155 aa).

Belongs to the RecX family.

Its subcellular location is the cytoplasm. Functionally, modulates RecA activity. In Pseudomonas entomophila (strain L48), this protein is Regulatory protein RecX.